The following is a 258-amino-acid chain: Imidazole glycerol phosphate synthase subunit HisF (258 aa).

Catalysis depends on residues Asp-11 and Asp-130.

Belongs to the HisA/HisF family. As to quaternary structure, heterodimer of HisH and HisF.

It localises to the cytoplasm. The enzyme catalyses 5-[(5-phospho-1-deoxy-D-ribulos-1-ylimino)methylamino]-1-(5-phospho-beta-D-ribosyl)imidazole-4-carboxamide + L-glutamine = D-erythro-1-(imidazol-4-yl)glycerol 3-phosphate + 5-amino-1-(5-phospho-beta-D-ribosyl)imidazole-4-carboxamide + L-glutamate + H(+). It functions in the pathway amino-acid biosynthesis; L-histidine biosynthesis; L-histidine from 5-phospho-alpha-D-ribose 1-diphosphate: step 5/9. In terms of biological role, IGPS catalyzes the conversion of PRFAR and glutamine to IGP, AICAR and glutamate. The HisF subunit catalyzes the cyclization activity that produces IGP and AICAR from PRFAR using the ammonia provided by the HisH subunit. In Nitrobacter hamburgensis (strain DSM 10229 / NCIMB 13809 / X14), this protein is Imidazole glycerol phosphate synthase subunit HisF.